Reading from the N-terminus, the 568-residue chain is Type 2 DNA topoisomerase 6 subunit B (568 aa).

ATP is bound by residues Asn-46, Asp-78, 99-100 (TK), 109-116 (GQQGIGIS), and Lys-473.

Belongs to the TOP6B family. In terms of assembly, homodimer. Heterotetramer of two Top6A and two Top6B chains.

It carries out the reaction ATP-dependent breakage, passage and rejoining of double-stranded DNA.. Functionally, relaxes both positive and negative superturns and exhibits a strong decatenase activity. This is Type 2 DNA topoisomerase 6 subunit B from Pyrococcus furiosus (strain ATCC 43587 / DSM 3638 / JCM 8422 / Vc1).